The primary structure comprises 300 residues: Glycine betaine/carnitine transport binding protein GbuC (300 aa).

The N-terminal stretch at Met1–Ala20 is a signal peptide. The N-palmitoyl cysteine moiety is linked to residue Cys21. The S-diacylglycerol cysteine moiety is linked to residue Cys21.

In terms of assembly, the complex is composed of two ATP-binding proteins (GbuA), two transmembrane proteins (GbuB) and a solute-binding protein (GbuC).

Its subcellular location is the cell membrane. With respect to regulation, the complex is activated by an osmotic gradient or by low temperature. Functionally, part of the ABC transporter complex GbuABC involved in glycine betaine uptake. Involved, with BetL and OpuC, in osmoprotection and cryoprotection of Listeria. Can also uptake carnitine when carnitine is abundant in the growth medium. The polypeptide is Glycine betaine/carnitine transport binding protein GbuC (gbuC) (Listeria monocytogenes serotype 1/2a (strain 10403S)).